Reading from the N-terminus, the 415-residue chain is Extracellular signal-regulated kinase 1 (415 aa).

The Protein kinase domain maps to 66–369; the sequence is YQILEIVGEG…VEDALKHPYL (304 aa). ATP-binding positions include 72–80 and Lys95; that span reads VGEGAYGIV. Asp190 serves as the catalytic Proton acceptor. A Phosphothreonine modification is found at Thr226. Residues 226–228 carry the TXY motif; sequence TEY. Tyr228 bears the Phosphotyrosine mark.

Belongs to the protein kinase superfamily. CMGC Ser/Thr protein kinase family. MAP kinase subfamily. The cofactor is Mg(2+). Dually phosphorylated on Thr-226 and Tyr-228, which activates the enzyme.

The catalysed reaction is L-seryl-[protein] + ATP = O-phospho-L-seryl-[protein] + ADP + H(+). It catalyses the reaction L-threonyl-[protein] + ATP = O-phospho-L-threonyl-[protein] + ADP + H(+). With respect to regulation, activated by tyrosine and threonine phosphorylation. This chain is Extracellular signal-regulated kinase 1 (CEK1), found in Candida albicans (strain WO-1) (Yeast).